A 248-amino-acid polypeptide reads, in one-letter code: 23S rRNA (guanosine-2'-O-)-methyltransferase RlmB (248 aa).

3 residues coordinate S-adenosyl-L-methionine: G198, L218, and L227.

This sequence belongs to the class IV-like SAM-binding methyltransferase superfamily. RNA methyltransferase TrmH family. RlmB subfamily.

Its subcellular location is the cytoplasm. It carries out the reaction guanosine(2251) in 23S rRNA + S-adenosyl-L-methionine = 2'-O-methylguanosine(2251) in 23S rRNA + S-adenosyl-L-homocysteine + H(+). Functionally, specifically methylates the ribose of guanosine 2251 in 23S rRNA. The protein is 23S rRNA (guanosine-2'-O-)-methyltransferase RlmB of Pseudomonas putida (strain ATCC 47054 / DSM 6125 / CFBP 8728 / NCIMB 11950 / KT2440).